Here is a 229-residue protein sequence, read N- to C-terminus: Enolase-phosphatase E1 (229 aa).

This sequence belongs to the HAD-like hydrolase superfamily. MasA/MtnC family. Monomer. Mg(2+) serves as cofactor.

It carries out the reaction 5-methylsulfanyl-2,3-dioxopentyl phosphate + H2O = 1,2-dihydroxy-5-(methylsulfanyl)pent-1-en-3-one + phosphate. Its pathway is amino-acid biosynthesis; L-methionine biosynthesis via salvage pathway; L-methionine from S-methyl-5-thio-alpha-D-ribose 1-phosphate: step 3/6. It functions in the pathway amino-acid biosynthesis; L-methionine biosynthesis via salvage pathway; L-methionine from S-methyl-5-thio-alpha-D-ribose 1-phosphate: step 4/6. Functionally, bifunctional enzyme that catalyzes the enolization of 2,3-diketo-5-methylthiopentyl-1-phosphate (DK-MTP-1-P) into the intermediate 2-hydroxy-3-keto-5-methylthiopentenyl-1-phosphate (HK-MTPenyl-1-P), which is then dephosphorylated to form the acireductone 1,2-dihydroxy-3-keto-5-methylthiopentene (DHK-MTPene). This Serratia proteamaculans (strain 568) protein is Enolase-phosphatase E1.